The following is a 204-amino-acid chain: MSKLKIDFPAVVYPDFTLIAGVDEVGRGPLVGDVVTACVILDANNPISGLADSKKLSEKKLALLFDEIQEKALFVAVGRASPVEIDALNILHATMLAMQRAVDNLSISPEFVFIDGNRCPQLSMPCESVVKGDARVAEISAASIIAKVTRDREMCELDKQYPHYGFAKHKGYPTKAHFAAIEKHGVTPEYRKSFKPVKKVLGLL.

An RNase H type-2 domain is found at 17 to 204; sequence TLIAGVDEVG…KPVKKVLGLL (188 aa). A divalent metal cation is bound by residues Asp23, Glu24, and Asp115.

This sequence belongs to the RNase HII family. Requires Mn(2+) as cofactor. Mg(2+) is required as a cofactor.

The protein localises to the cytoplasm. The catalysed reaction is Endonucleolytic cleavage to 5'-phosphomonoester.. Endonuclease that specifically degrades the RNA of RNA-DNA hybrids. This is Ribonuclease HII from Psychromonas ingrahamii (strain DSM 17664 / CCUG 51855 / 37).